The sequence spans 533 residues: Beta-1,4 N-acetylgalactosaminyltransferase 1 (533 aa).

The Cytoplasmic segment spans residues 1–7 (MWLGRRA). A helical; Signal-anchor for type II membrane protein transmembrane segment spans residues 8-25 (LCALVLLLACASLGLLYA). Residues 26-533 (STRDAPGLRL…KHRLQCMTSQ (508 aa)) lie on the Lumenal side of the membrane. N-linked (GlcNAc...) asparagine glycosylation is found at asparagine 79, asparagine 179, and asparagine 274. Cysteine 429 and cysteine 476 are joined by a disulfide.

This sequence belongs to the glycosyltransferase 2 family. As to quaternary structure, homodimer; disulfide-linked.

The protein localises to the golgi apparatus membrane. It carries out the reaction a ganglioside GM3 (d18:1(4E)) + UDP-N-acetyl-alpha-D-galactosamine = a ganglioside GM2 (d18:1(4E)) + UDP + H(+). The enzyme catalyses a ganglioside GM3 + UDP-N-acetyl-alpha-D-galactosamine = a ganglioside GM2 + UDP + H(+). It catalyses the reaction a ganglioside GD3 + UDP-N-acetyl-alpha-D-galactosamine = a ganglioside GD2 + UDP + H(+). The catalysed reaction is a ganglioside GD3 (d18:1(4E)) + UDP-N-acetyl-alpha-D-galactosamine = a ganglioside GD2 (d18:1(4E)) + UDP + H(+). It carries out the reaction a beta-D-Gal-(1-&gt;4)-beta-D-Glc-(1&lt;-&gt;1)-Cer(d18:1(4E)) + UDP-N-acetyl-alpha-D-galactosamine = a ganglioside GA2 (d18:1(4E)) + UDP + H(+). The enzyme catalyses a ganglioside GD1a + UDP-N-acetyl-alpha-D-galactosamine = a ganglioside GalNAc-GD1a + UDP + H(+). It catalyses the reaction a ganglioside GT3 (d18:1(4E)) + UDP-N-acetyl-alpha-D-galactosamine = a ganglioside GT2 (d18:1(4E)) + UDP + H(+). The catalysed reaction is a beta-D-galactosyl-(1-&gt;4)-beta-D-glucosyl-(1&lt;-&gt;1)-ceramide + UDP-N-acetyl-alpha-D-galactosamine = a ganglioside GA2 + UDP + H(+). It carries out the reaction a neolactoside IV(3)-alpha-NeuGc-nLc4Cer + UDP-N-acetyl-alpha-D-galactosamine = a neolactoside IV(4)-beta-GalNAc-IV(3)-alpha-NeuGc-nLc4Cer + UDP + H(+). The protein operates within sphingolipid metabolism. Its function is as follows. Involved in the biosynthesis of gangliosides GM2, GD2, GT2 and GA2 from GM3, GD3, GT3 and GA3, respectively. In Homo sapiens (Human), this protein is Beta-1,4 N-acetylgalactosaminyltransferase 1.